The primary structure comprises 229 residues: Transmembrane emp24 domain-containing protein 5 (229 aa).

The N-terminal stretch at 1–27 is a signal peptide; that stretch reads MGDKIWLPFPVLLLAALPPVLLPGAAG. At 28–196 the chain is on the lumenal side; that stretch reads FTPSLDSDFT…IQESNFDRVN (169 aa). Positions 45–126 constitute a GOLD domain; that stretch reads RECFYQPMPL…EKVIFFELIL (82 aa). Residues 197 to 217 form a helical membrane-spanning segment; that stretch reads FWSMVNLVVMVVVSAIQVYML. Residues 218 to 229 are Cytoplasmic-facing; sequence KSLFEDKRKSRT.

The protein belongs to the EMP24/GP25L family. In terms of assembly, interacts with TMED9 and TMED10.

The protein localises to the endoplasmic reticulum membrane. Its subcellular location is the golgi apparatus. The protein resides in the cis-Golgi network membrane. It is found in the endoplasmic reticulum-Golgi intermediate compartment membrane. Potential role in vesicular protein trafficking, mainly in the early secretory pathway. Required for the maintenance of the Golgi apparatus; involved in protein exchange between Golgi stacks during assembly. Probably not required for COPI-vesicle-mediated retrograde transport. The chain is Transmembrane emp24 domain-containing protein 5 (TMED5) from Pongo abelii (Sumatran orangutan).